Consider the following 1035-residue polypeptide: Teashirt homolog 2 (1035 aa).

A disordered region spans residues 1-92 (MPRRKQQAPK…ESLLSDASDQ (92 aa)). Positions 13–42 (AGYAQEEQLKEEEEIKEEEEEEEDSGSVAQ) form a coiled coil. Residues 21-37 (LKEEEEIKEEEEEEEDS) are compositionally biased toward acidic residues. Polar residues-rich tracts occupy residues 39–49 (SVAQLQGSNDP) and 66–92 (SYQN…ASDQ). Residue lysine 189 forms a Glycyl lysine isopeptide (Lys-Gly) (interchain with G-Cter in SUMO2) linkage. 2 C2H2-type zinc fingers span residues 216-240 (FRCR…ETGH) and 276-300 (LKCM…KTKH). A disordered region spans residues 240 to 266 (HYQDDNRKKDKLRPTSYSKPRKRAFQD). Glycyl lysine isopeptide (Lys-Gly) (interchain with G-Cter in SUMO2) cross-links involve residues lysine 307 and lysine 316. A C2H2-type 3; atypical zinc finger spans residues 381 to 405 (LKCMECGSSHDTLQQLTTHMMVTGH). Lysine 418 is covalently cross-linked (Glycyl lysine isopeptide (Lys-Gly) (interchain with G-Cter in SUMO2)). The span at 432–450 (SLSDAPSSDSLAPKPSSNS) shows a compositional bias: low complexity. Positions 432–496 (SLSDAPSSDS…DPLQKPLDPA (65 aa)) are disordered. Over residues 460-483 (ELKRESKKEKPEELRTDEKVLKSE) the composition is skewed to basic and acidic residues. Glycyl lysine isopeptide (Lys-Gly) (interchain with G-Cter in SUMO2) cross-links involve residues lysine 462, lysine 481, lysine 498, and lysine 602. Disordered regions lie at residues 600 to 674 (QVKK…VEPV) and 764 to 791 (QPID…PQKH). Basic and acidic residues predominate over residues 601–669 (VKKEPEDKEE…KDGGEKEKAQ (69 aa)). Residues lysine 801 and lysine 821 each participate in a glycyl lysine isopeptide (Lys-Gly) (interchain with G-Cter in SUMO2) cross-link. The segment at residues 842 to 912 (RKGRQSNWNP…NVKYQLRKTG (71 aa)) is a DNA-binding region (homeobox). A C2H2-type 4 zinc finger spans residues 927–949 (FYCSDCASQFRTPSTYISHLESH). The segment covering 968-977 (VEQEISRVSS) has biased composition (low complexity). Disordered stretches follow at residues 968–987 (VEQE…TIAG) and 1015–1035 (SKTH…VDEE). Phosphoserine is present on serine 981. The C2H2-type 5 zinc finger occupies 995–1018 (FKCKLCCRTFVSKHAVKLHLSKTH).

It belongs to the teashirt C2H2-type zinc-finger protein family. As to quaternary structure, interacts (via homeobox domain) with APBB1 (via PID domain 1). Post-translationally, sumoylated.

Its subcellular location is the nucleus. Its function is as follows. Probable transcriptional regulator involved in developmental processes. May act as a transcriptional repressor (Potential). This Sus scrofa (Pig) protein is Teashirt homolog 2 (TSHZ2).